A 562-amino-acid polypeptide reads, in one-letter code: 3-(3-hydroxy-phenyl)propionate/3-hydroxycinnamic acid hydroxylase (562 aa).

FAD contacts are provided by residues 8–37 and 275–285; these read DVVIVGAGPVGLTLANILGGQGVRTLIIEE and FRKGRMLLAGD.

This sequence belongs to the PheA/TfdB FAD monooxygenase family. It depends on FAD as a cofactor.

The enzyme catalyses 3-(3-hydroxyphenyl)propanoate + NADH + O2 + H(+) = 3-(2,3-dihydroxyphenyl)propanoate + NAD(+) + H2O. The catalysed reaction is (2E)-3-(3-hydroxyphenyl)prop-2-enoate + NADH + O2 + H(+) = (2E)-3-(2,3-dihydroxyphenyl)prop-2-enoate + NAD(+) + H2O. Its pathway is aromatic compound metabolism; 3-phenylpropanoate degradation. Functionally, catalyzes the insertion of one atom of molecular oxygen into position 2 of the phenyl ring of 3-(3-hydroxyphenyl)propionate (3-HPP) and hydroxycinnamic acid (3HCI). This Mycolicibacterium smegmatis (strain ATCC 700084 / mc(2)155) (Mycobacterium smegmatis) protein is 3-(3-hydroxy-phenyl)propionate/3-hydroxycinnamic acid hydroxylase.